Reading from the N-terminus, the 597-residue chain is MDHIRNFSIIAHIDHGKSTLADRIIQVCGGLADREMEAQVLDSMDIERERGITIKAQTAALSYRARDGKVYNLNLIDTPGHVDFSYEVSRSLSACEGALLVVDASQGVEAQTVANCYTAIELGVEVVPVLNKIDLPAANPENAIEEIEDVIGIDATDATRCSAKTGLGVEDVLESLIAKVPPPKGDPAAPLQALIIDSWFDNYVGVVMLVRIVNGTLRPKDKIKLMATGAQYPVEHIGVFTPKSRNLETLSAGQVGFIIAGIKELTAAKVGDTVTHATKAAVEPLPGFKEVKPQVFAGLYPVEANQYDALRESLEKLKLNDASLQYEPEVSQALGFGFRCGFLGLLHMEIVQERLEREFDMDLITTAPTVVYEVMMSDGAIIKVENPAKMPEPPRIEEIREPIVTVNLYMPQDYVGSVITLCEQKRGSQINMQYHGRQVQLTYEIPMAEIVLDFFDRLKSVSRGYASMDYEFKEYRAADVVKVDMLINGDKVDALSVIVHRSQSQYRGREVAAKMREIIPRQMYDVAIQATIGAHIIARENIKALRKNVLAKCYGGDISRKKKLLEKQKAGKKRMKQVGSVEIPQEAFLAILRVEDK.

One can recognise a tr-type G domain in the interval aspartate 2–lysine 184. GTP-binding positions include aspartate 14–threonine 19 and asparagine 131–aspartate 134.

It belongs to the TRAFAC class translation factor GTPase superfamily. Classic translation factor GTPase family. LepA subfamily.

Its subcellular location is the cell inner membrane. The enzyme catalyses GTP + H2O = GDP + phosphate + H(+). Functionally, required for accurate and efficient protein synthesis under certain stress conditions. May act as a fidelity factor of the translation reaction, by catalyzing a one-codon backward translocation of tRNAs on improperly translocated ribosomes. Back-translocation proceeds from a post-translocation (POST) complex to a pre-translocation (PRE) complex, thus giving elongation factor G a second chance to translocate the tRNAs correctly. Binds to ribosomes in a GTP-dependent manner. This chain is Elongation factor 4, found in Burkholderia lata (strain ATCC 17760 / DSM 23089 / LMG 22485 / NCIMB 9086 / R18194 / 383).